The sequence spans 201 residues: MLPVAASRCLWGPRLGLRGAALRLARQQMPSVCAARQLRSSSHRRSEALAGAPLDNAPKEYPPKIQQLVQDIASLTLLEISDLNELLKKTLKIQDVGLMPMGGMVPGPVSAAAPASEAAEEEDVPKQKERTHFTVRLTEAKPVDKVKLIKEIKNYVQGINLVQAKKLVESLPQEIKANVAKAEAEKIKAALEAVGGTVVLE.

The N-terminal 38 residues, 1–38 (MLPVAASRCLWGPRLGLRGAALRLARQQMPSVCAARQL), are a transit peptide targeting the mitochondrion. 2 disordered regions span residues 37–60 (QLRS…APKE) and 109–130 (VSAA…QKER). N6-acetyllysine is present on residues lysine 128, lysine 141, lysine 145, and lysine 147. Lysine 153 is subject to N6-acetyllysine; alternate. Lysine 153 carries the post-translational modification N6-succinyllysine; alternate. Lysine 153 is covalently cross-linked (Glycyl lysine isopeptide (Lys-Gly) (interchain with G-Cter in ubiquitin)). Lysine 165 carries the N6-succinyllysine modification. Residues lysine 166 and lysine 176 each carry the N6-acetyllysine modification. At lysine 181 the chain carries N6-acetyllysine; alternate. An N6-succinyllysine; alternate modification is found at lysine 181. Lysine 188 is modified (N6-acetyllysine).

The protein belongs to the bacterial ribosomal protein bL12 family. As to quaternary structure, component of the mitochondrial ribosome large subunit (39S) which comprises a 16S rRNA and about 50 distinct proteins. Interacts with NOA1. In terms of processing, two mature forms are produced by differential two-step proteolytic cleavage. Cleaved by the mitochondrial processing protease to produce the long mature form and subsequently by the mitochondrial intermediate protease to produce the short mature form. In the presence of CUL3, undergoes 'Lys-63'-linked ubiquitination at Lys-153 which results in proteasomal degradation.

It localises to the mitochondrion matrix. Functionally, as a component of the mitochondrial large ribosomal subunit, plays a role in mitochondrial translation. When present in mitochondria as a free protein not associated with the ribosome, associates with mitochondrial RNA polymerase POLRMT to activate transcription. Required for POLRMT stability. This is Large ribosomal subunit protein bL12m (Mrpl12) from Mus musculus (Mouse).